The chain runs to 833 residues: Leucine--tRNA ligase (833 aa).

Positions 41 to 52 (PYPSGAGLHVGH) match the 'HIGH' region motif. Residues 610 to 614 (KMSKS) carry the 'KMSKS' region motif. ATP is bound at residue Lys-613.

It belongs to the class-I aminoacyl-tRNA synthetase family.

The protein localises to the cytoplasm. The enzyme catalyses tRNA(Leu) + L-leucine + ATP = L-leucyl-tRNA(Leu) + AMP + diphosphate. In Streptococcus pyogenes serotype M49 (strain NZ131), this protein is Leucine--tRNA ligase.